A 283-amino-acid chain; its full sequence is Bifunctional protein FolD (283 aa).

NADP(+) is bound by residues 165–167 (GAS) and Ser190.

The protein belongs to the tetrahydrofolate dehydrogenase/cyclohydrolase family. As to quaternary structure, homodimer.

It catalyses the reaction (6R)-5,10-methylene-5,6,7,8-tetrahydrofolate + NADP(+) = (6R)-5,10-methenyltetrahydrofolate + NADPH. It carries out the reaction (6R)-5,10-methenyltetrahydrofolate + H2O = (6R)-10-formyltetrahydrofolate + H(+). It participates in one-carbon metabolism; tetrahydrofolate interconversion. In terms of biological role, catalyzes the oxidation of 5,10-methylenetetrahydrofolate to 5,10-methenyltetrahydrofolate and then the hydrolysis of 5,10-methenyltetrahydrofolate to 10-formyltetrahydrofolate. The sequence is that of Bifunctional protein FolD from Cupriavidus pinatubonensis (strain JMP 134 / LMG 1197) (Cupriavidus necator (strain JMP 134)).